Reading from the N-terminus, the 275-residue chain is Esterase AAEL000016 (275 aa).

The segment at 1-21 (MMANETAAKSTKSSPTPAVEP) is disordered. Polar residues predominate over residues 7–16 (AAKSTKSSPT). Active-site charge relay system residues include Ser-129, Asp-187, and His-214. A disordered region spans residues 253 to 275 (LVDDSGPAGNGVHDDDDDDDDSD). A compositionally biased stretch (acidic residues) spans 266–275 (DDDDDDDDSD).

It belongs to the LovG family.

The polypeptide is Esterase AAEL000016 (Aedes aegypti (Yellowfever mosquito)).